A 299-amino-acid chain; its full sequence is Coenzyme PQQ synthesis protein B (299 aa).

This sequence belongs to the PqqB family.

The protein operates within cofactor biosynthesis; pyrroloquinoline quinone biosynthesis. May be involved in the transport of PQQ or its precursor to the periplasm. The chain is Coenzyme PQQ synthesis protein B from Methylobacterium radiotolerans (strain ATCC 27329 / DSM 1819 / JCM 2831 / NBRC 15690 / NCIMB 10815 / 0-1).